Reading from the N-terminus, the 265-residue chain is MAEEYKNNVPEHETPTVATEESPATTTEVTDRGLFDFLGKKEEEVKPQETTTLESEFDHKAQISEPELAAEHEEVKENKITLLEELQEKTEEDEENKPSVIEKLHRSNSSSSSSSDEEGEEKKEKKKKIVEGEEDKKGLVEKIKEKLPGHHDKTAEDDVPVSTTIPVPVSESVVEHDHPEEEKKGLVEKIKEKLPGHHDEKAEDSPAVTSTPLVVTEHPVEPTTELPVEHPEEKKGILEKIKEKLPGYHAKTTEEEVKKEKESDD.

The segment covering 1 to 14 has biased composition (basic and acidic residues); that stretch reads MAEEYKNNVPEHET. Positions 1 to 265 are disordered; it reads MAEEYKNNVP…EVKKEKESDD (265 aa). Position 2 is an N-acetylalanine (Ala-2). Polar residues predominate over residues 16 to 28; the sequence is TVATEESPATTTE. Over residues 29–47 the composition is skewed to basic and acidic residues; sequence VTDRGLFDFLGKKEEEVKP. Ser-64 is subject to Phosphoserine. Positions 69-79 are enriched in basic and acidic residues; it reads AAEHEEVKENK. Phosphothreonine is present on Thr-90. Basic and acidic residues-rich tracts occupy residues 96 to 105 and 129 to 156; these read NKPSVIEKLH and IVEG…KTAE. Repeat unit 1 spans residues 133 to 153; it reads EEDKKGLVEKIKEKLPGHHDK. The interval 133–251 is 3 X 21 AA repeats, Lys-rich; the sequence is EEDKKGLVEK…KEKLPGYHAK (119 aa). A compositionally biased stretch (low complexity) spans 160-172; that stretch reads PVSTTIPVPVSES. Basic and acidic residues-rich tracts occupy residues 173–204 and 227–265; these read VVEH…KAED and PVEH…ESDD. 2 repeat units span residues 180–200 and 231–251.

The protein belongs to the plant dehydrin family.

The sequence is that of Dehydrin COR47 (COR47) from Arabidopsis thaliana (Mouse-ear cress).